A 93-amino-acid polypeptide reads, in one-letter code: Small ribosomal subunit protein uS19 (93 aa).

The protein belongs to the universal ribosomal protein uS19 family.

Functionally, protein S19 forms a complex with S13 that binds strongly to the 16S ribosomal RNA. This Mycobacteroides abscessus (strain ATCC 19977 / DSM 44196 / CCUG 20993 / CIP 104536 / JCM 13569 / NCTC 13031 / TMC 1543 / L948) (Mycobacterium abscessus) protein is Small ribosomal subunit protein uS19.